The following is a 448-amino-acid chain: tRNA wybutosine-synthesizing protein 2 homolog (448 aa).

Residues Ser-218, Lys-225, Glu-265, and Asp-293–Asn-294 contribute to the S-adenosyl-L-methionine site.

The protein belongs to the class I-like SAM-binding methyltransferase superfamily. TRM5/TYW2 family.

It carries out the reaction 4-demethylwyosine(37) in tRNA(Phe) + S-adenosyl-L-methionine = 4-demethyl-7-[(3S)-3-amino-3-carboxypropyl]wyosine(37) in tRNA(Phe) + S-methyl-5'-thioadenosine + H(+). It functions in the pathway tRNA modification; wybutosine-tRNA(Phe) biosynthesis. In terms of biological role, S-adenosyl-L-methionine-dependent transferase that acts as a component of the wybutosine biosynthesis pathway. Wybutosine is a hyper modified guanosine with a tricyclic base found at the 3'-position adjacent to the anticodon of eukaryotic phenylalanine tRNA. Catalyzes the transfer of the alpha-amino-alpha-carboxypropyl (acp) group from S-adenosyl-L-methionine to the C-7 position of 4-demethylwyosine (imG-14) to produce wybutosine-86. This Homo sapiens (Human) protein is tRNA wybutosine-synthesizing protein 2 homolog (TRMT12).